The chain runs to 265 residues: Indole-3-glycerol phosphate synthase (265 aa).

It belongs to the TrpC family.

It carries out the reaction 1-(2-carboxyphenylamino)-1-deoxy-D-ribulose 5-phosphate + H(+) = (1S,2R)-1-C-(indol-3-yl)glycerol 3-phosphate + CO2 + H2O. It functions in the pathway amino-acid biosynthesis; L-tryptophan biosynthesis; L-tryptophan from chorismate: step 4/5. The protein is Indole-3-glycerol phosphate synthase of Xanthomonas oryzae pv. oryzae (strain PXO99A).